Consider the following 189-residue polypeptide: MLQKQVSTTTTMTTQELAMEGEKQLEETIEAAFQIISAMNDELCNPSLWSTSATPSSAATTTGSNGSALVSADAAAIDGTSHHSESAGGGGGGGSGNSVLDEASLRYKNSVTSLRAVLAAIPNSQKAKASEMQNGLGSPESEDEIEKLEEQALSLRMEIAKKNVHVKELIDKLRELIADISTWQSPCSV.

Residues 138–178 (SPESEDEIEKLEEQALSLRMEIAKKNVHVKELIDKLRELIA) adopt a coiled-coil conformation.

The protein belongs to the plant Mediator complex subunit 30 family. In terms of assembly, component of the Mediator complex.

Its subcellular location is the nucleus. Component of the Mediator complex, a coactivator involved in the regulated transcription of nearly all RNA polymerase II-dependent genes. Mediator functions as a bridge to convey information from gene-specific regulatory proteins to the basal RNA polymerase II transcription machinery. The Mediator complex, having a compact conformation in its free form, is recruited to promoters by direct interactions with regulatory proteins and serves for the assembly of a functional preinitiation complex with RNA polymerase II and the general transcription factors. The protein is Mediator of RNA polymerase II transcription subunit 30 (MED30) of Arabidopsis thaliana (Mouse-ear cress).